The chain runs to 720 residues: Iron-sulfur clusters transporter ATM1, mitochondrial (720 aa).

A mitochondrion-targeting transit peptide spans 1-36 (MIMFRSLSVTPVWKAGLSLSHRSIPINSRLSSVRNY). Topologically, residues 37–129 (ISIGCANKTG…PSGDNKVKIR (93 aa)) are mitochondrial matrix. Polar residues predominate over residues 64-77 (RFNSSSNGNGTDKN). The segment at 64–102 (RFNSSSNGNGTDKNASVAPKTEVKKIVPPKPSTNGKSKT) is disordered. Residues 130 to 151 (VLIALALLIGAKLLNVQVPFFF) form a helical membrane-spanning segment. The region spanning 130 to 421 (VLIALALLIG…LGSVYRELKQ (292 aa)) is the ABC transmembrane type-1 domain. Over 152 to 175 (KQTIDSMNIEWGPDVATVLPVAIT) the chain is Mitochondrial intermembrane. A helical membrane pass occupies residues 176-199 (MTILSYGAARFGAVMFGELRNAVF). The Mitochondrial matrix segment spans residues 200–248 (AKVAQNAIRKVSLQTFQHLMKLDLGWHLSRQTGGLTRAMDRGTKGISYV). A helical transmembrane segment spans residues 249–272 (LSAMVFHMIPITFEISVVCGILTY). Position 273 (Gln273) is a topological domain, mitochondrial intermembrane. Residues 274 to 294 (FGSSFAAMTFVTMLLYSFFTF) form a helical membrane-spanning segment. The Mitochondrial matrix segment spans residues 295-360 (KTTAWRTEFR…SQIKVAQSLA (66 aa)). Glutathione contacts are provided by residues 300 to 304 (RTEFR) and 363 to 366 (NAGQ). The chain crosses the membrane as a helical span at residues 361–379 (FLNAGQNFIFTSALTAMMY). Residues 380-394 (MGASGVMEGALTVGD) are Mitochondrial intermembrane-facing. A helical transmembrane segment spans residues 395–416 (LVLINQLVFQLSVPLNFLGSVY). Residue Gly413 participates in glutathione binding. Residues 417–720 (RELKQSLIDM…EKEPRTSKKD (304 aa)) lie on the Mitochondrial matrix side of the membrane. In terms of domain architecture, ABC transporter spans 456–692 (IKFENVTFGY…PNSLYSELWN (237 aa)). ATP is bound by residues Tyr465 and 489–500 (GPSGSGKSTILR).

The protein belongs to the ABC transporter superfamily. ABCB family. Heavy Metal importer (TC 3.A.1.210) subfamily. Homodimer.

Its subcellular location is the mitochondrion inner membrane. In terms of biological role, performs an essential function in the generation of cytoplasmic iron-sulfur proteins by mediating the ATP-dependent export of Fe/S cluster precursors synthesized by NFS1 and other mitochondrial proteins. Hydrolyzes ATP. Binds glutathione and may function by transporting a glutathione-conjugated iron-sulfur compound. In Kluyveromyces lactis (strain ATCC 8585 / CBS 2359 / DSM 70799 / NBRC 1267 / NRRL Y-1140 / WM37) (Yeast), this protein is Iron-sulfur clusters transporter ATM1, mitochondrial.